The primary structure comprises 192 residues: Ion-translocating oxidoreductase complex subunit B (192 aa).

A hydrophobic region spans residues 1-26; sequence MNAIWIAVAAVSLLGLAFGAILGYAS. In terms of domain architecture, 4Fe-4S spans 32–91; the sequence is EDDPVVEKIDEILPQSQCGQCGYPGCRPYAEAISCNGEKINRCAPGGEAVMLKIAELLNV. [4Fe-4S] cluster contacts are provided by Cys-49, Cys-52, Cys-57, Cys-74, Cys-117, Cys-120, Cys-123, Cys-127, Cys-147, Cys-150, Cys-153, and Cys-157. 2 4Fe-4S ferredoxin-type domains span residues 108 to 137 and 138 to 167; these read MVAV…GATR and AMHT…LQPV.

This sequence belongs to the 4Fe4S bacterial-type ferredoxin family. RnfB subfamily. As to quaternary structure, the complex is composed of six subunits: RsxA, RsxB, RsxC, RsxD, RsxE and RsxG. Requires [4Fe-4S] cluster as cofactor.

It localises to the cell inner membrane. In terms of biological role, part of a membrane-bound complex that couples electron transfer with translocation of ions across the membrane. Required to maintain the reduced state of SoxR. This is Ion-translocating oxidoreductase complex subunit B from Escherichia coli O8 (strain IAI1).